Consider the following 179-residue polypeptide: Large ribosomal subunit protein uL6 (179 aa).

The protein belongs to the universal ribosomal protein uL6 family. Part of the 50S ribosomal subunit.

This protein binds to the 23S rRNA, and is important in its secondary structure. It is located near the subunit interface in the base of the L7/L12 stalk, and near the tRNA binding site of the peptidyltransferase center. This Prochlorococcus marinus (strain SARG / CCMP1375 / SS120) protein is Large ribosomal subunit protein uL6.